We begin with the raw amino-acid sequence, 643 residues long: Phosphomethylpyrimidine synthase (643 aa).

Substrate contacts are provided by residues Asn-248, Met-277, Tyr-306, His-342, 362–364, 403–406, and Glu-442; these read SRG and DGLR. His-446 is a Zn(2+) binding site. Tyr-469 contributes to the substrate binding site. His-510 serves as a coordination point for Zn(2+). [4Fe-4S] cluster-binding residues include Cys-590, Cys-593, and Cys-598.

It belongs to the ThiC family. As to quaternary structure, homodimer. Requires [4Fe-4S] cluster as cofactor.

It carries out the reaction 5-amino-1-(5-phospho-beta-D-ribosyl)imidazole + S-adenosyl-L-methionine = 4-amino-2-methyl-5-(phosphooxymethyl)pyrimidine + CO + 5'-deoxyadenosine + formate + L-methionine + 3 H(+). The protein operates within cofactor biosynthesis; thiamine diphosphate biosynthesis. Its function is as follows. Catalyzes the synthesis of the hydroxymethylpyrimidine phosphate (HMP-P) moiety of thiamine from aminoimidazole ribotide (AIR) in a radical S-adenosyl-L-methionine (SAM)-dependent reaction. This Burkholderia multivorans (strain ATCC 17616 / 249) protein is Phosphomethylpyrimidine synthase.